The chain runs to 272 residues: MTDMHSLLVAAILGIVEGLTEFLPVSSTGHMIIVGHLLGFEGDTAKTFEVVIQLGSILAVVVMFWRRLFGLIGIHFGHPPHEGVGKGRLSLIHILLGMVPAVVLGLVFHDFIKSLFNPINVMYALVVGGVLLIIAEVLKPKEPKAPGLDDMTYRQAFFIGCFQCLALWPGFSRSGATISGGMLVGVSRYAASEFSFLLAVPMMMGATALDLYKSMGFLTMADLPMFAVGFVTAFVVALVAIKTFLHIIKRISFIPFAIYRFIVAAAVFAVFM.

The next 8 membrane-spanning stretches (helical) occupy residues Ser-6–Ser-26, Ala-45–Trp-65, Leu-89–His-109, Leu-115–Ala-135, Ala-156–Ala-176, Tyr-189–Leu-209, Ala-221–Ile-241, and Ile-251–Phe-271.

Belongs to the UppP family.

It localises to the cell inner membrane. The catalysed reaction is di-trans,octa-cis-undecaprenyl diphosphate + H2O = di-trans,octa-cis-undecaprenyl phosphate + phosphate + H(+). Functionally, catalyzes the dephosphorylation of undecaprenyl diphosphate (UPP). Confers resistance to bacitracin. This is Undecaprenyl-diphosphatase from Cronobacter sakazakii (strain ATCC BAA-894) (Enterobacter sakazakii).